The following is a 392-amino-acid chain: Ribosomal RNA large subunit methyltransferase G (392 aa).

This sequence belongs to the methyltransferase superfamily. RlmG family.

It localises to the cytoplasm. The enzyme catalyses guanosine(1835) in 23S rRNA + S-adenosyl-L-methionine = N(2)-methylguanosine(1835) in 23S rRNA + S-adenosyl-L-homocysteine + H(+). Specifically methylates the guanine in position 1835 (m2G1835) of 23S rRNA. The polypeptide is Ribosomal RNA large subunit methyltransferase G (Colwellia psychrerythraea (strain 34H / ATCC BAA-681) (Vibrio psychroerythus)).